Here is a 708-residue protein sequence, read N- to C-terminus: O-antigen chain terminator bifunctional methyltransferase/kinase WbdD (708 aa).

Positions 1–210 are methyltransferase; that stretch reads MTKDLNTLVS…VPRPMYLVSN (210 aa). Residues 16-17, Arg36, Gly61, 82-87, 108-111, and Leu128 each bind S-adenosyl-L-methionine; these read YQ, DFQQEN, and GRIE. Residues 211–459 are kinase; sequence HRVLINDFNQ…AKLPSAEQQR (249 aa). ATP-binding positions include Pro229, His237, 241–243, Lys252, Glu274, 309–311, Met358, and Asp369; these read RRY and EKL. Residues 485 to 594 are a coiled coil; it reads AGSEALRGQI…EIEKIHRSRS (110 aa). The segment at 601 to 669 is required for membrane-binding; sequence YRYLGLQIHL…RLYRRMNPLP (69 aa). Positions 687–708 are required for localizing WbdA to the membrane; the sequence is VMHPELLPPEVYEIYLKLTKNK.

It belongs to the WbdD family. In terms of assembly, homotrimer in solution. Interacts with WbdA.

It is found in the cell inner membrane. It catalyses the reaction 3-O-phospho-alpha-D-Man-(1-&gt;2)-alpha-D-Man-(1-&gt;2)-[alpha-D-Man-(1-&gt;3)-alpha-D-Man-(1-&gt;3)-alpha-D-Man-(1-&gt;2)-alpha-D-Man-(1-&gt;2)](n)-alpha-D-Man-(1-&gt;3)-alpha-D-Man-(1-&gt;3)-alpha-D-Man-(1-&gt;3)-alpha-D-GlcNAc-di-trans,octa-cis-undecaprenyl diphosphate + S-adenosyl-L-methionine = 3-O-methylphospho-alpha-D-Man-(1-&gt;2)-alpha-D-Man-(1-&gt;2)-[alpha-D-Man-(1-&gt;3)-alpha-D-Man-(1-&gt;3)-alpha-D-Man-(1-&gt;2)-alpha-D-Man-(1-&gt;2)](n)-alpha-D-Man-(1-&gt;3)-alpha-D-Man-(1-&gt;3)-alpha-D-Man-(1-&gt;3)-alpha-D-GlcNAc-di-trans,octa-cis-undecaprenyl diphosphate + S-adenosyl-L-homocysteine. The enzyme catalyses alpha-D-Man-(1-&gt;2)-alpha-D-Man-(1-&gt;2)-[alpha-D-Man-(1-&gt;3)-alpha-D-Man-(1-&gt;3)-alpha-D-Man-(1-&gt;2)-alpha-D-Man-(1-&gt;2)](n)-alpha-D-Man-(1-&gt;3)-alpha-D-Man-(1-&gt;3)-alpha-D-Man-(1-&gt;3)-alpha-D-GlcNAc-di-trans,octa-cis-undecaprenyl diphosphate + ATP = 3-O-phospho-alpha-D-Man-(1-&gt;2)-alpha-D-Man-(1-&gt;2)-[alpha-D-Man-(1-&gt;3)-alpha-D-Man-(1-&gt;3)-alpha-D-Man-(1-&gt;2)-alpha-D-Man-(1-&gt;2)](n)-alpha-D-Man-(1-&gt;3)-alpha-D-Man-(1-&gt;3)-alpha-D-Man-(1-&gt;3)-alpha-D-GlcNAc-di-trans,octa-cis-undecaprenyl diphosphate + ADP + H(+). It functions in the pathway bacterial outer membrane biogenesis; LPS O-antigen biosynthesis. Regulates the length of the LPS O-antigen polysaccharide chain. Stops the polymerization of the chain by phosphorylating and then methylating the phosphate on the terminal sugar. This terminal modification is essential for export of the O-antigen across the inner membrane. WbdD is also required for correct localization of the WbdA mannosyltransferase. This is O-antigen chain terminator bifunctional methyltransferase/kinase WbdD from Escherichia coli.